Reading from the N-terminus, the 126-residue chain is Ribosome-binding factor A (126 aa).

It belongs to the RbfA family. As to quaternary structure, monomer. Binds 30S ribosomal subunits, but not 50S ribosomal subunits or 70S ribosomes.

The protein localises to the cytoplasm. Functionally, one of several proteins that assist in the late maturation steps of the functional core of the 30S ribosomal subunit. Associates with free 30S ribosomal subunits (but not with 30S subunits that are part of 70S ribosomes or polysomes). Required for efficient processing of 16S rRNA. May interact with the 5'-terminal helix region of 16S rRNA. This Treponema pallidum (strain Nichols) protein is Ribosome-binding factor A.